The chain runs to 120 residues: Large ribosomal subunit protein bL19c (120 aa).

This sequence belongs to the bacterial ribosomal protein bL19 family.

It is found in the plastid. Its subcellular location is the chloroplast. The polypeptide is Large ribosomal subunit protein bL19c (Thalassiosira pseudonana (Marine diatom)).